The following is a 140-amino-acid chain: GTP-dependent dephospho-CoA kinase (140 aa).

Residues aspartate 21, valine 22, valine 23, aspartate 40, lysine 42, and glutamate 92 each contribute to the GTP site.

The protein belongs to the GTP-dependent DPCK family.

It carries out the reaction 3'-dephospho-CoA + GTP = GDP + CoA + H(+). Its pathway is cofactor biosynthesis; coenzyme A biosynthesis. Catalyzes the GTP-dependent phosphorylation of the 3'-hydroxyl group of dephosphocoenzyme A to form coenzyme A (CoA). This chain is GTP-dependent dephospho-CoA kinase, found in Pyrobaculum aerophilum (strain ATCC 51768 / DSM 7523 / JCM 9630 / CIP 104966 / NBRC 100827 / IM2).